A 252-amino-acid polypeptide reads, in one-letter code: Phosphoribosylformylglycinamidine synthase subunit PurQ (252 aa).

A Glutamine amidotransferase type-1 domain is found at 6–237; that stretch reads VGVVVFPGSN…FAHLAGTKRS (232 aa). C89 (nucleophile) is an active-site residue. Residues H206 and E208 contribute to the active site.

As to quaternary structure, part of the FGAM synthase complex composed of 1 PurL, 1 PurQ and 2 PurS subunits.

It localises to the cytoplasm. It carries out the reaction N(2)-formyl-N(1)-(5-phospho-beta-D-ribosyl)glycinamide + L-glutamine + ATP + H2O = 2-formamido-N(1)-(5-O-phospho-beta-D-ribosyl)acetamidine + L-glutamate + ADP + phosphate + H(+). The enzyme catalyses L-glutamine + H2O = L-glutamate + NH4(+). It participates in purine metabolism; IMP biosynthesis via de novo pathway; 5-amino-1-(5-phospho-D-ribosyl)imidazole from N(2)-formyl-N(1)-(5-phospho-D-ribosyl)glycinamide: step 1/2. Its function is as follows. Part of the phosphoribosylformylglycinamidine synthase complex involved in the purines biosynthetic pathway. Catalyzes the ATP-dependent conversion of formylglycinamide ribonucleotide (FGAR) and glutamine to yield formylglycinamidine ribonucleotide (FGAM) and glutamate. The FGAM synthase complex is composed of three subunits. PurQ produces an ammonia molecule by converting glutamine to glutamate. PurL transfers the ammonia molecule to FGAR to form FGAM in an ATP-dependent manner. PurS interacts with PurQ and PurL and is thought to assist in the transfer of the ammonia molecule from PurQ to PurL. The sequence is that of Phosphoribosylformylglycinamidine synthase subunit PurQ from Chlorobaculum parvum (strain DSM 263 / NCIMB 8327) (Chlorobium vibrioforme subsp. thiosulfatophilum).